The following is a 543-amino-acid chain: Chaperonin GroEL (543 aa).

Residues 29–32 (TLGP), 86–90 (DGTTT), G413, 476–478 (NAA), and D492 each bind ATP.

Belongs to the chaperonin (HSP60) family. In terms of assembly, forms a cylinder of 14 subunits composed of two heptameric rings stacked back-to-back. Interacts with the co-chaperonin GroES.

It is found in the cytoplasm. The enzyme catalyses ATP + H2O + a folded polypeptide = ADP + phosphate + an unfolded polypeptide.. Together with its co-chaperonin GroES, plays an essential role in assisting protein folding. The GroEL-GroES system forms a nano-cage that allows encapsulation of the non-native substrate proteins and provides a physical environment optimized to promote and accelerate protein folding. The protein is Chaperonin GroEL of Streptococcus pyogenes serotype M49 (strain NZ131).